A 187-amino-acid polypeptide reads, in one-letter code: Ribose 1,5-bisphosphate phosphokinase PhnN (187 aa).

9–16 (GPSGSGKD) provides a ligand contact to ATP.

Belongs to the ribose 1,5-bisphosphokinase family.

The catalysed reaction is alpha-D-ribose 1,5-bisphosphate + ATP = 5-phospho-alpha-D-ribose 1-diphosphate + ADP. The protein operates within metabolic intermediate biosynthesis; 5-phospho-alpha-D-ribose 1-diphosphate biosynthesis; 5-phospho-alpha-D-ribose 1-diphosphate from D-ribose 5-phosphate (route II): step 3/3. Catalyzes the phosphorylation of ribose 1,5-bisphosphate to 5-phospho-D-ribosyl alpha-1-diphosphate (PRPP). The sequence is that of Ribose 1,5-bisphosphate phosphokinase PhnN from Desulfomicrobium baculatum (strain DSM 4028 / VKM B-1378 / X) (Desulfovibrio baculatus).